The following is a 313-amino-acid chain: Competence protein ComGA (313 aa).

138–145 (GPVGSGKT) provides a ligand contact to ATP.

This sequence belongs to the GSP E family.

The protein resides in the cell membrane. In terms of biological role, required for uptake of DNA by competent cells. May be involved in assembly of a complex forming a transformation pilus at the surface of competent cells. This chain is Competence protein ComGA, found in Streptococcus pneumoniae (strain ATCC BAA-255 / R6).